The chain runs to 342 residues: tRNA N6-adenosine threonylcarbamoyltransferase (342 aa).

2 residues coordinate Fe cation: H120 and H124. Residues 142–146, D175, G188, D192, and N281 each bind substrate; that span reads VVSGG. D310 contributes to the Fe cation binding site.

It belongs to the KAE1 / TsaD family. Fe(2+) is required as a cofactor.

It is found in the cytoplasm. The catalysed reaction is L-threonylcarbamoyladenylate + adenosine(37) in tRNA = N(6)-L-threonylcarbamoyladenosine(37) in tRNA + AMP + H(+). Required for the formation of a threonylcarbamoyl group on adenosine at position 37 (t(6)A37) in tRNAs that read codons beginning with adenine. Is involved in the transfer of the threonylcarbamoyl moiety of threonylcarbamoyl-AMP (TC-AMP) to the N6 group of A37, together with TsaE and TsaB. TsaD likely plays a direct catalytic role in this reaction. This chain is tRNA N6-adenosine threonylcarbamoyltransferase, found in Geobacillus thermodenitrificans (strain NG80-2).